The chain runs to 364 residues: Phosphate acyltransferase (364 aa).

The segment at Ile343–Ala364 is disordered.

It belongs to the PlsX family. As to quaternary structure, homodimer. Probably interacts with PlsY.

Its subcellular location is the cytoplasm. The catalysed reaction is a fatty acyl-[ACP] + phosphate = an acyl phosphate + holo-[ACP]. Its pathway is lipid metabolism; phospholipid metabolism. Its function is as follows. Catalyzes the reversible formation of acyl-phosphate (acyl-PO(4)) from acyl-[acyl-carrier-protein] (acyl-ACP). This enzyme utilizes acyl-ACP as fatty acyl donor, but not acyl-CoA. The polypeptide is Phosphate acyltransferase (Novosphingobium aromaticivorans (strain ATCC 700278 / DSM 12444 / CCUG 56034 / CIP 105152 / NBRC 16084 / F199)).